The primary structure comprises 466 residues: Asparagine--tRNA ligase (466 aa).

Belongs to the class-II aminoacyl-tRNA synthetase family. In terms of assembly, homodimer.

The protein localises to the cytoplasm. The enzyme catalyses tRNA(Asn) + L-asparagine + ATP = L-asparaginyl-tRNA(Asn) + AMP + diphosphate + H(+). The protein is Asparagine--tRNA ligase of Shewanella putrefaciens (strain CN-32 / ATCC BAA-453).